Reading from the N-terminus, the 227-residue chain is uncharacterized protein (227 aa).

Residues 7–26 (IITLTILIFISGLLTAFLLL) form a helical membrane-spanning segment.

It localises to the membrane. This is an uncharacterized protein from Haemophilus influenzae (strain ATCC 51907 / DSM 11121 / KW20 / Rd).